The sequence spans 447 residues: Hemopexin (447 aa).

The N-terminal stretch at 1-18 (MRLIQALSLCLALSLSLA) is a signal peptide. The disordered stretch occupies residues 20 to 44 (PPQHKEDHSHKGKPGGEGHKHELHH). Basic and acidic residues predominate over residues 22–44 (QHKEDHSHKGKPGGEGHKHELHH). Hemopexin repeat units lie at residues 53 to 93 (GIEF…FPEL), 99 to 151 (LGHV…FPGI), 152 to 197 (PDHL…FKSM), 198 to 243 (PNCT…FMRC), 262 to 304 (RVHL…FKEL), 305 to 351 (HSEV…VLGI), 352 to 395 (EGPV…TITQ), and 396 to 441 (FKRI…VSQQ). N87 carries an N-linked (GlcNAc...) asparagine glycan. N168 and N199 each carry an N-linked (GlcNAc...) asparagine glycan. Position 293 (H293) interacts with heme.

Belongs to the hemopexin family.

The protein resides in the secreted. In terms of biological role, binds heme and transports it to the liver for breakdown and iron recovery, after which the free hemopexin returns to the circulation. In Danio rerio (Zebrafish), this protein is Hemopexin.